A 343-amino-acid chain; its full sequence is MPLDDRKKRILFAVVTDYIMTAEPIGSRTIAKKYNMGISSATIRNEMADLEEMGYLEQPHTSAGRIPSDKGYRFYVDTILQNFMKEDLSPPPRVREEVIAEFDEIVKKYAKILADITHHTTVAKMPKLNPDKIKRLQLIPVASNKMIMVVITDTGIVKNYLLNLCQSVDRNVFEFLNNLLNDKIAGKSEKAIFNFLEKELKDTLGDMAFMADELIKTILLSLKQLQETDVYTDGTLHILDFPEYKDLNKAKNFLSLLDNKSLLNEVLEPVDDFVDVKIGRENRFEEMRELSVIKTTYKINDRVVGTIGIIGPTRMDYRRLISELTLMTRELSNLLSSIYNDEV.

It belongs to the HrcA family.

In terms of biological role, negative regulator of class I heat shock genes (grpE-dnaK-dnaJ and groELS operons). Prevents heat-shock induction of these operons. The polypeptide is Heat-inducible transcription repressor HrcA (Caldanaerobacter subterraneus subsp. tengcongensis (strain DSM 15242 / JCM 11007 / NBRC 100824 / MB4) (Thermoanaerobacter tengcongensis)).